The following is a 427-amino-acid chain: 3-phosphoshikimate 1-carboxyvinyltransferase (427 aa).

Residues K22, S23, and R27 each coordinate 3-phosphoshikimate. K22 lines the phosphoenolpyruvate pocket. Residues G96 and R124 each contribute to the phosphoenolpyruvate site. 3-phosphoshikimate contacts are provided by S169, S170, Q171, S197, D313, N336, and K340. Q171 lines the phosphoenolpyruvate pocket. D313 acts as the Proton acceptor in catalysis. The phosphoenolpyruvate site is built by R344, R386, and K411.

Belongs to the EPSP synthase family. Monomer.

It is found in the cytoplasm. The enzyme catalyses 3-phosphoshikimate + phosphoenolpyruvate = 5-O-(1-carboxyvinyl)-3-phosphoshikimate + phosphate. It participates in metabolic intermediate biosynthesis; chorismate biosynthesis; chorismate from D-erythrose 4-phosphate and phosphoenolpyruvate: step 6/7. Functionally, catalyzes the transfer of the enolpyruvyl moiety of phosphoenolpyruvate (PEP) to the 5-hydroxyl of shikimate-3-phosphate (S3P) to produce enolpyruvyl shikimate-3-phosphate and inorganic phosphate. This chain is 3-phosphoshikimate 1-carboxyvinyltransferase, found in Salmonella paratyphi A (strain ATCC 9150 / SARB42).